Consider the following 421-residue polypeptide: UDP-N-acetylglucosamine 1-carboxyvinyltransferase (421 aa).

Residue 22 to 23 participates in phosphoenolpyruvate binding; sequence KN. UDP-N-acetyl-alpha-D-glucosamine is bound at residue Arg-93. Catalysis depends on Cys-117, which acts as the Proton donor. At Cys-117 the chain carries 2-(S-cysteinyl)pyruvic acid O-phosphothioketal. Residues 122–126, Asp-308, and Ile-330 each bind UDP-N-acetyl-alpha-D-glucosamine; that span reads RPVDL.

Belongs to the EPSP synthase family. MurA subfamily.

It is found in the cytoplasm. The catalysed reaction is phosphoenolpyruvate + UDP-N-acetyl-alpha-D-glucosamine = UDP-N-acetyl-3-O-(1-carboxyvinyl)-alpha-D-glucosamine + phosphate. It functions in the pathway cell wall biogenesis; peptidoglycan biosynthesis. In terms of biological role, cell wall formation. Adds enolpyruvyl to UDP-N-acetylglucosamine. The chain is UDP-N-acetylglucosamine 1-carboxyvinyltransferase from Pseudomonas savastanoi pv. phaseolicola (strain 1448A / Race 6) (Pseudomonas syringae pv. phaseolicola (strain 1448A / Race 6)).